The chain runs to 361 residues: Peptide chain release factor 1 (361 aa).

Position 236 is an N5-methylglutamine (Gln-236). Residues 285-309 (TAKDSARAADRKAQVGSGDRSERIR) show a composition bias toward basic and acidic residues. The interval 285–313 (TAKDSARAADRKAQVGSGDRSERIRTYNF) is disordered.

This sequence belongs to the prokaryotic/mitochondrial release factor family. Post-translationally, methylated by PrmC. Methylation increases the termination efficiency of RF1.

It localises to the cytoplasm. Peptide chain release factor 1 directs the termination of translation in response to the peptide chain termination codons UAG and UAA. The protein is Peptide chain release factor 1 of Methylorubrum populi (strain ATCC BAA-705 / NCIMB 13946 / BJ001) (Methylobacterium populi).